The sequence spans 767 residues: Photosystem I P700 chlorophyll a apoprotein A1 (767 aa).

The next 8 membrane-spanning stretches (helical) occupy residues 72–95 (IFSA…FHGA), 158–181 (LMAL…FHYH), 197–221 (LNHH…HVSA), 305–323 (IAHH…GHMY), 364–387 (WHAQ…QHMY), 403–429 (IGLF…IAMV), 451–473 (AIIS…LYIH), and 548–566 (FMVH…LILL). 2 residues coordinate [4Fe-4S] cluster: Cys590 and Cys599. 2 helical membrane passes run 606 to 627 (HVFL…HFSW) and 681 to 703 (TAAY…MFLF). Residue His692 participates in chlorophyll a' binding. The chlorophyll a site is built by Met700 and Tyr708. Trp709 serves as a coordination point for phylloquinone. Residues 741-761 (AVGVAHYLLGGIATTWAFFHA) traverse the membrane as a helical segment.

It belongs to the PsaA/PsaB family. In terms of assembly, the PsaA/B heterodimer binds the P700 chlorophyll special pair and subsequent electron acceptors. PSI consists of a core antenna complex that captures photons, and an electron transfer chain that converts photonic excitation into a charge separation. The cyanobacterial PSI reaction center is composed of one copy each of PsaA,B,C,D,E,F,I,J,K,L,M and X, and forms trimeric complexes. Requires PSI electron transfer chain: 5 chlorophyll a, 1 chlorophyll a', 2 phylloquinones and 3 4Fe-4S clusters. PSI core antenna: 90 chlorophyll a, 22 carotenoids, 3 phospholipids and 1 galactolipid. P700 is a chlorophyll a/chlorophyll a' dimer, A0 is one or more chlorophyll a, A1 is one or both phylloquinones and FX is a shared 4Fe-4S iron-sulfur center. as cofactor.

The protein resides in the cellular thylakoid membrane. It catalyses the reaction reduced [plastocyanin] + hnu + oxidized [2Fe-2S]-[ferredoxin] = oxidized [plastocyanin] + reduced [2Fe-2S]-[ferredoxin]. Its function is as follows. PsaA and PsaB bind P700, the primary electron donor of photosystem I (PSI), as well as the electron acceptors A0, A1 and FX. PSI is a plastocyanin/cytochrome c6-ferredoxin oxidoreductase, converting photonic excitation into a charge separation, which transfers an electron from the donor P700 chlorophyll pair to the spectroscopically characterized acceptors A0, A1, FX, FA and FB in turn. Oxidized P700 is reduced on the lumenal side of the thylakoid membrane by plastocyanin or cytochrome c6. This is Photosystem I P700 chlorophyll a apoprotein A1 from Synechococcus sp. (strain CC9605).